The primary structure comprises 404 residues: Protein L-Myc-1b (404 aa).

Disordered regions lie at residues 175 to 195 (KKQVSSGSESRTDSSDDEEID) and 238 to 331 (QQHN…FLER). Residues 287–315 (VPAQSPTVSASPTHTSYHLKSQPSSPQSS) are compositionally biased toward polar residues. The bHLH domain maps to 321 to 373 (DKRKTHNFLERKRRNDLRSRFLALRDEIPGLVDCPKTPKVVILTKATEYLRTL). Positions 373-401 (LHVSDRQKAQEKKQLKSKQQQLLRRLAEL) are leucine-zipper.

Efficient DNA binding requires dimerization with another bHLH protein. Binds DNA as a heterodimer with max.

Its subcellular location is the nucleus. The sequence is that of Protein L-Myc-1b from Danio rerio (Zebrafish).